A 189-amino-acid chain; its full sequence is Adenylate kinase (189 aa).

10–15 (GAGKGT) lines the ATP pocket. Positions 30 to 59 (STGDIFRANVSGGTELGKKAQAYMDRGDLV) are NMP. AMP contacts are provided by residues Thr31, Arg36, 57 to 59 (DLV), 85 to 88 (GFPR), and Gln92. The segment at 126-136 (ERARIDNRSDD) is LID. Arg127 lines the ATP pocket. The AMP site is built by Arg133 and Arg144. An ATP-binding site is contributed by Gly172.

This sequence belongs to the adenylate kinase family. As to quaternary structure, monomer.

The protein resides in the cytoplasm. It catalyses the reaction AMP + ATP = 2 ADP. It participates in purine metabolism; AMP biosynthesis via salvage pathway; AMP from ADP: step 1/1. Its function is as follows. Catalyzes the reversible transfer of the terminal phosphate group between ATP and AMP. Plays an important role in cellular energy homeostasis and in adenine nucleotide metabolism. This Thermobifida fusca (strain YX) protein is Adenylate kinase.